A 224-amino-acid chain; its full sequence is Cytidylate kinase (224 aa).

11–19 (GPAAAGKST) contacts ATP.

This sequence belongs to the cytidylate kinase family. Type 1 subfamily.

Its subcellular location is the cytoplasm. The catalysed reaction is CMP + ATP = CDP + ADP. The enzyme catalyses dCMP + ATP = dCDP + ADP. The chain is Cytidylate kinase from Listeria monocytogenes serotype 4b (strain CLIP80459).